The chain runs to 542 residues: CTP synthase (542 aa).

The interval 1-265 is amidoligase domain; the sequence is MARYIFITGG…DSEVLCAFGI (265 aa). A CTP-binding site is contributed by Ser-13. A UTP-binding site is contributed by Ser-13. 14 to 19 provides a ligand contact to ATP; the sequence is SLGKGI. Tyr-54 is an L-glutamine binding site. Asp-71 is a binding site for ATP. Mg(2+) is bound by residues Asp-71 and Glu-139. Residues 146-148, 186-191, and Lys-222 each bind CTP; these read DIE and KTKPTQ. UTP contacts are provided by residues 186-191 and Lys-222; that span reads KTKPTQ. Residues 291 to 541 enclose the Glutamine amidotransferase type-1 domain; the sequence is TIAVVGKYTG…IEATVEQSRL (251 aa). Ala-353 provides a ligand contact to L-glutamine. The Nucleophile; for glutamine hydrolysis role is filled by Cys-380. L-glutamine is bound by residues 381-384, Glu-404, and Arg-469; that span reads FGMQ. Residues His-514 and Glu-516 contribute to the active site.

The protein belongs to the CTP synthase family. As to quaternary structure, homotetramer.

The catalysed reaction is UTP + L-glutamine + ATP + H2O = CTP + L-glutamate + ADP + phosphate + 2 H(+). It carries out the reaction L-glutamine + H2O = L-glutamate + NH4(+). It catalyses the reaction UTP + NH4(+) + ATP = CTP + ADP + phosphate + 2 H(+). It functions in the pathway pyrimidine metabolism; CTP biosynthesis via de novo pathway; CTP from UDP: step 2/2. With respect to regulation, allosterically activated by GTP, when glutamine is the substrate; GTP has no effect on the reaction when ammonia is the substrate. The allosteric effector GTP functions by stabilizing the protein conformation that binds the tetrahedral intermediate(s) formed during glutamine hydrolysis. Inhibited by the product CTP, via allosteric rather than competitive inhibition. Its function is as follows. Catalyzes the ATP-dependent amination of UTP to CTP with either L-glutamine or ammonia as the source of nitrogen. Regulates intracellular CTP levels through interactions with the four ribonucleotide triphosphates. This Bartonella quintana (strain Toulouse) (Rochalimaea quintana) protein is CTP synthase.